A 71-amino-acid chain; its full sequence is Disintegrin horridistatin-2 (71 aa).

The Disintegrin domain occupies 1-71 (GEECDCGSPA…ADCPRNGLYG (71 aa)). Disulfide bonds link C4–C19, C6–C14, C13–C36, C27–C33, C32–C57, and C45–C64. The short motif at 49–51 (RGD) is the Cell attachment site element.

The protein belongs to the venom metalloproteinase (M12B) family. P-II subfamily. P-IIa sub-subfamily. Monomer (disintegrin). In terms of tissue distribution, expressed by the venom gland.

The protein resides in the secreted. In terms of biological role, inhibits ADP-induced platelet aggregation (IC(50) is 16.2 nM) by binding to alpha-IIb/beta-3 (ITGA2B/ITGB3). This chain is Disintegrin horridistatin-2, found in Crotalus horridus (Timber rattlesnake).